A 403-amino-acid chain; its full sequence is Interferon-induced protein with tetratricopeptide repeats 3 (403 aa).

TPR repeat units lie at residues 94-127 (LVTW…CQKF), 136-169 (PELE…KPKD), 172-206 (CSSG…NPQN), and 241-274 (TDVL…TVNN).

The protein belongs to the IFIT family. As to quaternary structure, component of an interferon-dependent multiprotein complex, at least composed of IFIT1, IFIT2 and IFIT3. Interacts with IFIT1 and IFIT2. Interacts (via N-terminus) with MAVS, TBK1, TRAF6 and RIGI. Interacts with COPS5.

The protein resides in the cytoplasm. It is found in the mitochondrion. In terms of biological role, IFN-induced antiviral protein which acts as an inhibitor of cellular as well as viral processes, cell migration, proliferation, signaling, and viral replication. Enhances MAVS-mediated host antiviral responses by serving as an adapter bridging TBK1 to MAVS which leads to the activation of TBK1 and phosphorylation of IRF3 and phosphorylated IRF3 translocates into nucleus to promote antiviral gene transcription. Exhibits an antiproliferative activity via the up-regulation of cell cycle negative regulators CDKN1A/p21 and CDKN1B/p27. Normally, CDKN1B/p27 turnover is regulated by COPS5, which binds CDKN1B/p27 in the nucleus and exports it to the cytoplasm for ubiquitin-dependent degradation. IFIT3 sequesters COPS5 in the cytoplasm, thereby increasing nuclear CDKN1B/p27 protein levels. Up-regulates CDKN1A/p21 by down-regulating MYC, a repressor of CDKN1A/p21. Can negatively regulate the apoptotic effects of IFIT2. The polypeptide is Interferon-induced protein with tetratricopeptide repeats 3 (Ifit3) (Mus musculus (Mouse)).